Reading from the N-terminus, the 249-residue chain is 5'-nucleotidase SurE (249 aa).

A divalent metal cation-binding residues include Asp-9, Asp-10, Ser-40, and Asn-92.

It belongs to the SurE nucleotidase family. A divalent metal cation is required as a cofactor.

It is found in the cytoplasm. It catalyses the reaction a ribonucleoside 5'-phosphate + H2O = a ribonucleoside + phosphate. Its function is as follows. Nucleotidase that shows phosphatase activity on nucleoside 5'-monophosphates. The sequence is that of 5'-nucleotidase SurE from Shewanella sp. (strain ANA-3).